Reading from the N-terminus, the 107-residue chain is Metallothionein-1 (107 aa).

The protein belongs to the metallothionein superfamily. Type 7 family.

Functionally, the metallothioneins are involved in the cellular sequestration of toxic metal ions. Binds 12 cadmium ions per molecule. The protein is Metallothionein-1 of Tetrahymena thermophila.